A 472-amino-acid polypeptide reads, in one-letter code: MAGEDHPWQGSILYNLLMSAKQKHASQEEREVRLGAQCWGCACGAQPVLGGERLSGGQARSLLYRCCFCGENHPRQGGILYSMLTNARQPSVATQAPRARFGAPCWGCACGSAEPLVGREGLPAGQAPSLLYRCCFCGEEHPRQGSILYSLLTSAQQTHVSREAPEAHRRGEWWQLSYCTQSVGGPEGLQSTQAMAFLYRSYVCGEEQPQQISVASGTPVSADQTPATPQEQPRAPWWDASPGVQRLITLKDPQVVCEAASAGLLKTLRFVKYLPCFQILPLDQQLVLVRSCWAPLLMLELAQDHLHFEMMEIPETNTTQEMLTTRRQETEGPEPAEPQATEQPQMVSAEAGHLLPAAAVQAIKSFFFKCWSLNIDTKEYAYLKGTVLFNPDLPGLQCVKYIEGLQWRTQQILTEHIRMMQREYQIRSAELNSALFLLRFINSDVVTELFFRPIIGAVSMDDMMLEMLCAKL.

3 tandem repeats follow at residues 1–67 (MAGE…YRCC), 68–135 (FCGE…YRCC), and 136–202 (FCGE…YRSY). The 4 X 67 AA tandem repeats stretch occupies residues 1 to 255 (MAGEDHPWQG…RLITLKDPQV (255 aa)). Short sequence motifs (LXXLL motif) lie at residues 13–17 (LYNLL), 80–84 (LYSML), and 148–152 (LYSLL). In terms of domain architecture, NR LBD spans 190 to 471 (QSTQAMAFLY…DMMLEMLCAK (282 aa)). Residues 203-255 (VCGEEQPQQISVASGTPVSADQTPATPQEQPRAPWWDASPGVQRLITLKDPQV) form a 4; truncated repeat. Residues 214 to 231 (VASGTPVSADQTPATPQE) are compositionally biased toward polar residues. 2 disordered regions span residues 214–238 (VASGTPVSADQTPATPQEQPRAPWW) and 324–343 (TTRRQETEGPEPAEPQATEQ). The short motif at 463-468 (MMLEML) is the AF-2 motif element.

This sequence belongs to the nuclear hormone receptor family. NR0 subfamily. Homodimer. Interacts with NR5A1, NR5A2, NR0B2 and with COPS2. Interacts with ESRRB; represses ESRRB activity at the GATA6 promoter. Expressed in adult cerebral cortex, spinal cord, thymus, heart, lung, ovary, testis, adrenal gland, hypothalamus, spleen and kidney.

It localises to the nucleus. The protein resides in the cytoplasm. In terms of biological role, nuclear receptor that lacks a DNA-binding domain and acts as a corepressor that inhibits the transcriptional activity of other nuclear receptors through heterodimeric interactions. Component of a cascade required for the development of the hypothalamic-pituitary-adrenal-gonadal axis. May also have a role in the development of the embryo and in the maintenance of embryonic stem cell pluripotency. The chain is Nuclear receptor subfamily 0 group B member 1 (Nr0b1) from Mus musculus (Mouse).